Reading from the N-terminus, the 244-residue chain is Krueppel-like factor 9 (244 aa).

The segment at 80 to 142 (SVCSDSLESP…AKGKHASEKR (63 aa)) is disordered. Ser-122 carries the phosphoserine modification. 3 consecutive C2H2-type zinc fingers follow at residues 143–167 (HKCP…YRVH), 173–197 (FPCT…YRTH), and 203–225 (FRCP…ARRH).

This sequence belongs to the Sp1 C2H2-type zinc-finger protein family. In terms of assembly, interacts with ZZEF1. Epidermis (at protein level).

It is found in the nucleus. In terms of biological role, transcription factor that binds to GC box promoter elements. Selectively activates mRNA synthesis from genes containing tandem repeats of GC boxes but represses genes with a single GC box. Acts as an epidermal circadian transcription factor regulating keratinocyte proliferation. The chain is Krueppel-like factor 9 (KLF9) from Homo sapiens (Human).